Here is a 177-residue protein sequence, read N- to C-terminus: Large ribosomal subunit protein uL6 (177 aa).

It belongs to the universal ribosomal protein uL6 family. Part of the 50S ribosomal subunit.

In terms of biological role, this protein binds to the 23S rRNA, and is important in its secondary structure. It is located near the subunit interface in the base of the L7/L12 stalk, and near the tRNA binding site of the peptidyltransferase center. This Rickettsia peacockii (strain Rustic) protein is Large ribosomal subunit protein uL6.